Here is a 462-residue protein sequence, read N- to C-terminus: L-seryl-tRNA(Sec) selenium transferase (462 aa).

Lysine 292 is modified (N6-(pyridoxal phosphate)lysine).

The protein belongs to the SelA family. The cofactor is pyridoxal 5'-phosphate.

The protein localises to the cytoplasm. It catalyses the reaction L-seryl-tRNA(Sec) + selenophosphate + H(+) = L-selenocysteinyl-tRNA(Sec) + phosphate. The protein operates within aminoacyl-tRNA biosynthesis; selenocysteinyl-tRNA(Sec) biosynthesis; selenocysteinyl-tRNA(Sec) from L-seryl-tRNA(Sec) (bacterial route): step 1/1. Its function is as follows. Converts seryl-tRNA(Sec) to selenocysteinyl-tRNA(Sec) required for selenoprotein biosynthesis. The chain is L-seryl-tRNA(Sec) selenium transferase from Clostridium perfringens (strain ATCC 13124 / DSM 756 / JCM 1290 / NCIMB 6125 / NCTC 8237 / Type A).